A 361-amino-acid chain; its full sequence is Hydroxymethylglutaryl-CoA synthase (361 aa).

Glutamate 92 acts as the Proton donor/acceptor in catalysis. Cysteine 124 acts as the Acyl-thioester intermediate in catalysis. The (3S)-3-hydroxy-3-methylglutaryl-CoA site is built by cysteine 124, serine 165, threonine 214, and histidine 247. Histidine 247 serves as the catalytic Proton donor/acceptor. Lysine 252 serves as a coordination point for CoA. Residues lysine 256, asparagine 279, and serine 309 each coordinate (3S)-3-hydroxy-3-methylglutaryl-CoA.

This sequence belongs to the thiolase-like superfamily. Archaeal HMG-CoA synthase family. As to quaternary structure, interacts with acetoacetyl-CoA thiolase that catalyzes the precedent step in the pathway and with a DUF35 protein. The acetoacetyl-CoA thiolase/HMG-CoA synthase complex channels the intermediate via a fused CoA-binding site, which allows for efficient coupling of the endergonic thiolase reaction with the exergonic HMGCS reaction.

It catalyses the reaction acetoacetyl-CoA + acetyl-CoA + H2O = (3S)-3-hydroxy-3-methylglutaryl-CoA + CoA + H(+). The protein operates within metabolic intermediate biosynthesis; (R)-mevalonate biosynthesis; (R)-mevalonate from acetyl-CoA: step 2/3. Catalyzes the condensation of acetyl-CoA with acetoacetyl-CoA to form 3-hydroxy-3-methylglutaryl-CoA (HMG-CoA). Functions in the mevalonate (MVA) pathway leading to isopentenyl diphosphate (IPP), a key precursor for the biosynthesis of isoprenoid compounds that are building blocks of archaeal membrane lipids. The polypeptide is Hydroxymethylglutaryl-CoA synthase (Aeropyrum pernix (strain ATCC 700893 / DSM 11879 / JCM 9820 / NBRC 100138 / K1)).